Reading from the N-terminus, the 79-residue chain is uncharacterized protein (79 aa).

A signal peptide spans 1-24 (MKMNPCTVILCKSLFFFCLFQVDC). N-linked (GlcNAc...) asparagine glycosylation occurs at Asn33.

It localises to the secreted. This is an uncharacterized protein from Saccharomyces cerevisiae (strain ATCC 204508 / S288c) (Baker's yeast).